The following is a 157-amino-acid chain: SsrA-binding protein (157 aa).

The segment covering 135–151 has biased composition (basic and acidic residues); sequence DKRETEKKRDWSREKGR. Residues 135–157 form a disordered region; that stretch reads DKRETEKKRDWSREKGRLLRARG.

This sequence belongs to the SmpB family.

Its subcellular location is the cytoplasm. Its function is as follows. Required for rescue of stalled ribosomes mediated by trans-translation. Binds to transfer-messenger RNA (tmRNA), required for stable association of tmRNA with ribosomes. tmRNA and SmpB together mimic tRNA shape, replacing the anticodon stem-loop with SmpB. tmRNA is encoded by the ssrA gene; the 2 termini fold to resemble tRNA(Ala) and it encodes a 'tag peptide', a short internal open reading frame. During trans-translation Ala-aminoacylated tmRNA acts like a tRNA, entering the A-site of stalled ribosomes, displacing the stalled mRNA. The ribosome then switches to translate the ORF on the tmRNA; the nascent peptide is terminated with the 'tag peptide' encoded by the tmRNA and targeted for degradation. The ribosome is freed to recommence translation, which seems to be the essential function of trans-translation. In Rhodopseudomonas palustris (strain BisB5), this protein is SsrA-binding protein.